Here is a 266-residue protein sequence, read N- to C-terminus: MPVITMKQLLEAGVHFGHRTRRWNPKMAPYIYGARKGIYIIDLQKTLKLVEEACDFVKSKASEGATMIFVGTKKQAQHVVKEEAGKCGAFYVNNRWLGGLITNFKTIKPRIDKLIELEEMEKNGELAKLPKKEQSRLRKALEKLRKNLGGLKAMDRIPDIIYVIDPRKERIAVAEANKMGIPVIGVVDTNCDPDPVDFVIPANDDAIRSIKLITSKIAEAYLEGREGVSFTEETPSEPIQSDSSEEEEGSLDISDLFEDTDLKEEE.

The disordered stretch occupies residues 227 to 266 (GVSFTEETPSEPIQSDSSEEEEGSLDISDLFEDTDLKEEE). A compositionally biased stretch (polar residues) spans 231–240 (TEETPSEPIQ). Positions 243 to 266 (SSEEEEGSLDISDLFEDTDLKEEE) are enriched in acidic residues.

Belongs to the universal ribosomal protein uS2 family.

The chain is Small ribosomal subunit protein uS2 from Pseudothermotoga lettingae (strain ATCC BAA-301 / DSM 14385 / NBRC 107922 / TMO) (Thermotoga lettingae).